Reading from the N-terminus, the 273-residue chain is Large ribosomal subunit protein uL2 (273 aa).

The disordered stretch occupies residues 221–273 (RGTAMNPVDHPHGGGEGRNFGKHPVTPWGVQTKGKKTRHNKRTDKFIVRRRGK). A compositionally biased stretch (basic residues) spans 253 to 273 (KGKKTRHNKRTDKFIVRRRGK).

Belongs to the universal ribosomal protein uL2 family. In terms of assembly, part of the 50S ribosomal subunit. Forms a bridge to the 30S subunit in the 70S ribosome.

Its function is as follows. One of the primary rRNA binding proteins. Required for association of the 30S and 50S subunits to form the 70S ribosome, for tRNA binding and peptide bond formation. It has been suggested to have peptidyltransferase activity; this is somewhat controversial. Makes several contacts with the 16S rRNA in the 70S ribosome. This Glaesserella parasuis serovar 5 (strain SH0165) (Haemophilus parasuis) protein is Large ribosomal subunit protein uL2.